The chain runs to 119 residues: Ribonuclease pancreatic (119 aa).

Pyrrolidone carboxylic acid is present on Gln1. His10 (proton acceptor) is an active-site residue. 3 disulfides stabilise this stretch: Cys25/Cys80, Cys39/Cys91, and Cys57/Cys106. Residue 40-44 (KTRNT) participates in substrate binding. His113 serves as the catalytic Proton donor.

Belongs to the pancreatic ribonuclease family. Monomer. Interacts with and forms tight 1:1 complexes with RNH1. Dimerization of two such complexes may occur. Interaction with RNH1 inhibits this protein. As to expression, pancreas.

It is found in the secreted. It catalyses the reaction an [RNA] containing cytidine + H2O = an [RNA]-3'-cytidine-3'-phosphate + a 5'-hydroxy-ribonucleotide-3'-[RNA].. The catalysed reaction is an [RNA] containing uridine + H2O = an [RNA]-3'-uridine-3'-phosphate + a 5'-hydroxy-ribonucleotide-3'-[RNA].. In terms of biological role, endonuclease that catalyzes the cleavage of RNA on the 3' side of pyrimidine nucleotides. Acts on single-stranded and double-stranded RNA. This chain is Ribonuclease pancreatic, found in Iguana iguana (Common iguana).